A 236-amino-acid chain; its full sequence is MADDWESAADSEVVILPNAANNINKWEGEDDDEDVKESWEDEEEKKDEEKPTKTEVPVKPKPTRALKAKLEEEERLREAEEEKRLANLTPEEKFAEKLRVKKMQEESDMKHTLDTFGVTSISGGLESFNPESKEEFKEFGDTLSWKVAQFKESPHFPQFVEDLVRSICVNLSAADIKKVKINVELLHSEKLKLEKANTKKPIGKGKGKVSLRTENDDIDGYQKYGNDFTDDYDDFM.

Residues 20–88 (ANNINKWEGE…AEEEKRLANL (69 aa)) form a disordered region. Positions 28–46 (GEDDDEDVKESWEDEEEKK) are enriched in acidic residues. Composition is skewed to basic and acidic residues over residues 47-58 (DEEKPTKTEVPV) and 68-88 (AKLEEEERLREAEEEKRLANL).

This sequence belongs to the eIF-3 subunit J family. Component of the eukaryotic translation initiation factor 3 (eIF-3) complex. The eIF-3 complex interacts with pix.

It localises to the cytoplasm. Its function is as follows. Component of the eukaryotic translation initiation factor 3 (eIF-3) complex, which is involved in protein synthesis of a specialized repertoire of mRNAs and, together with other initiation factors, stimulates binding of mRNA and methionyl-tRNAi to the 40S ribosome. The eIF-3 complex specifically targets and initiates translation of a subset of mRNAs involved in cell proliferation. The polypeptide is Eukaryotic translation initiation factor 3 subunit J (Drosophila willistoni (Fruit fly)).